Reading from the N-terminus, the 888-residue chain is MQTHEIRERFTNHFVKAGHEAVPSASLILDDPNLLFVNAGMVPFKPYFLGQQNPPFPNGTATSIQKCVRTLDIEEVGITTRHNTFFQMAGNFSFGQYFKEGAITHAWQLLTGTVAEGGLGLDPERLWVTVYLDDDEAAEIWNKKIGVPSERIQRLGMADNYWSMGIPGPCGPCSEIYYDRGPEYGAEGGPIADDNRYMEIWNLVFMENERGEGIGKDNFEIVGPLPKKNIDTGMGIERVACILQGVDNVYETDLLRPVINVAEELTGATYGTNDDDNIRFRVIADHSRTGMMLILDGVTPGNEGRGYILRRLLRRIIRSAHLLGAKGKTLEKFMNTIMDTMTPSYPEIADNRERILRVAITEEKAFLKTLASGTELFEDKADQVKNSGNKVLDGAAAFKLHDTYGFPIDLTLEMAAEAGLNVDIEGFNSLMAEQRARAKADNRAKKHGHADLSIYREWVDEHPTVFTGYDELTTDSKVLGLLSAGNKVNEIKAGEEVEVILEASPLYAEAGGQLGDRGQILMGDTVLKVNDVQKIGKKLWVHKATVAQGGLSVGDVVTAQVDSDWRHAARQAHTGTHLIHAALRQVLGPTAVQAGSMNKPGYLRFDFNYTESLTPRQLEEIQNITNQAVDSDWDVNTIETSLEEAKAMGALALFGENYGSEVRVIEVGGPFSIELCGGTHVTHSSQIGPVAILGESSVGSGVRRIEAYTGLDSFKYLAKEQALVENIASSMKVKPEELPDRIAALTQKLKDAEKAIADMRSAQLMAQATGLVAGAIEVNGVKLVAQRVSDVENMGDLRSLAADIKQRLDDVPAVVALVGEDASGKAPFVVGATKAAVSAGYKANAYAKILGQYIEGNGGGKPDMAQGSARNSSGFDQGIAAVKAEMSA.

Residues histidine 573, histidine 577, cysteine 676, and histidine 680 each coordinate Zn(2+).

Belongs to the class-II aminoacyl-tRNA synthetase family. Zn(2+) is required as a cofactor.

Its subcellular location is the cytoplasm. The enzyme catalyses tRNA(Ala) + L-alanine + ATP = L-alanyl-tRNA(Ala) + AMP + diphosphate. Functionally, catalyzes the attachment of alanine to tRNA(Ala) in a two-step reaction: alanine is first activated by ATP to form Ala-AMP and then transferred to the acceptor end of tRNA(Ala). Also edits incorrectly charged Ser-tRNA(Ala) and Gly-tRNA(Ala) via its editing domain. The chain is Alanine--tRNA ligase from Corynebacterium diphtheriae (strain ATCC 700971 / NCTC 13129 / Biotype gravis).